Consider the following 192-residue polypeptide: Cytochrome c oxidase assembly protein CtaG (192 aa).

The Cytoplasmic portion of the chain corresponds to 1–9; sequence MSLSPHQKT. Residues 10 to 30 traverse the membrane as a helical; Signal-anchor for type II membrane protein segment; that stretch reads AGWLVGVVVVMGAASFAAVPF. Over 31-192 the chain is Periplasmic; sequence YDWFCRVTGF…AARPAGIDVN (162 aa).

Belongs to the COX11/CtaG family.

The protein resides in the cell inner membrane. In terms of biological role, exerts its effect at some terminal stage of cytochrome c oxidase synthesis, probably by being involved in the insertion of the copper B into subunit I. This Cereibacter sphaeroides (strain ATCC 17025 / ATH 2.4.3) (Rhodobacter sphaeroides) protein is Cytochrome c oxidase assembly protein CtaG.